The following is a 498-amino-acid chain: Cytochrome c-552 (498 aa).

The N-terminal stretch at 1–31 (MKNKERKLKSWQGWLIFSSSMVVVFCLGLLA) is a signal peptide. Histidine 119 lines the heme c pocket. Cysteine 148, cysteine 151, and lysine 152 together coordinate heme. Heme c contacts are provided by cysteine 186, cysteine 189, histidine 190, cysteine 228, cysteine 231, and histidine 232. Glutamate 234, tyrosine 235, lysine 280, and glutamine 282 together coordinate Ca(2+). Residue tyrosine 235 coordinates substrate. Position 283 (histidine 283) interacts with substrate. Heme c-binding residues include histidine 294, cysteine 301, cysteine 304, histidine 305, histidine 319, cysteine 332, cysteine 335, histidine 336, and histidine 411.

The protein belongs to the cytochrome c-552 family. Requires Ca(2+) as cofactor. The cofactor is heme c.

It is found in the periplasm. It catalyses the reaction 6 Fe(III)-[cytochrome c] + NH4(+) + 2 H2O = 6 Fe(II)-[cytochrome c] + nitrite + 8 H(+). Its pathway is nitrogen metabolism; nitrate reduction (assimilation). Catalyzes the reduction of nitrite to ammonia, consuming six electrons in the process. The chain is Cytochrome c-552 from Porphyromonas gingivalis (strain ATCC BAA-308 / W83).